The primary structure comprises 570 residues: 4-coumarate--CoA ligase 4 (570 aa).

Ser218, Ser219, Gly220, Thr221, Thr222, and Lys226 together coordinate ATP. Tyr268 is a binding site for (E)-4-coumaroyl-AMP. Arg289 is a binding site for CoA. The SBD1 stretch occupies residues 291-360 (ELNLVMELIQ…LKFPNAIFGQ (70 aa)). (E)-4-coumaroyl-AMP contacts are provided by Ala338, Gln360, Gly361, and Thr365. Residues Gln360, Gly361, Thr365, Asp448, and Arg463 each coordinate ATP. The interval 361–427 (GYGMTESGTV…VRGHQLMKGY (67 aa)) is SBD2. Residues Lys465 and Lys469 each coordinate (E)-4-coumaroyl-AMP. The CoA site is built by Lys471 and Gly472. Lys554 lines the ATP pocket.

It belongs to the ATP-dependent AMP-binding enzyme family. Mg(2+) serves as cofactor.

The catalysed reaction is (E)-sinapate + ATP + CoA = (E)-sinapoyl-CoA + AMP + diphosphate. It carries out the reaction (E)-4-coumarate + ATP + CoA = (E)-4-coumaroyl-CoA + AMP + diphosphate. It catalyses the reaction (E)-caffeate + ATP + CoA = (E)-caffeoyl-CoA + AMP + diphosphate. The enzyme catalyses (E)-ferulate + ATP + CoA = (E)-feruloyl-CoA + AMP + diphosphate. The catalysed reaction is (E)-sinapate + ATP + H(+) = (E)-sinapoyl-AMP + diphosphate. It carries out the reaction (E)-sinapoyl-AMP + CoA = (E)-sinapoyl-CoA + AMP + H(+). It catalyses the reaction (E)-4-coumarate + ATP + H(+) = (E)-4-coumaroyl-AMP + diphosphate. The enzyme catalyses (E)-4-coumaroyl-AMP + CoA = (E)-4-coumaroyl-CoA + AMP + H(+). The catalysed reaction is (E)-caffeate + ATP + H(+) = (E)-caffeoyl-AMP + diphosphate. It carries out the reaction (E)-caffeoyl-AMP + CoA = (E)-caffeoyl-CoA + AMP + H(+). It catalyses the reaction (E)-ferulate + ATP + H(+) = (E)-feruloyl-AMP + diphosphate. The enzyme catalyses (E)-feruloyl-AMP + CoA = (E)-feruloyl-CoA + AMP + H(+). It functions in the pathway phytoalexin biosynthesis; 3,4',5-trihydroxystilbene biosynthesis; 3,4',5-trihydroxystilbene from trans-4-coumarate: step 1/2. In terms of biological role, produces CoA thioesters of a variety of hydroxy- and methoxy-substituted cinnamic acids, which are used to synthesize several phenylpropanoid-derived compounds, including anthocyanins, flavonoids, isoflavonoids, coumarins, lignin, suberin and wall-bound phenolics. Follows a two-step reaction mechanism, wherein the carboxylate substrate first undergoes adenylation by ATP, followed by a thioesterification in the presence of CoA to yield the final CoA thioesters. This is 4-coumarate--CoA ligase 4 from Arabidopsis thaliana (Mouse-ear cress).